The sequence spans 237 residues: Orotidine 5'-phosphate decarboxylase (237 aa).

Residues Asp-11, Lys-34, 61-70 (DLKLHDIPNT), Thr-124, Arg-186, Gln-195, Gly-215, and Arg-216 each bind substrate. The Proton donor role is filled by Lys-63.

The protein belongs to the OMP decarboxylase family. Type 1 subfamily. Homodimer.

The catalysed reaction is orotidine 5'-phosphate + H(+) = UMP + CO2. It functions in the pathway pyrimidine metabolism; UMP biosynthesis via de novo pathway; UMP from orotate: step 2/2. Functionally, catalyzes the decarboxylation of orotidine 5'-monophosphate (OMP) to uridine 5'-monophosphate (UMP). The polypeptide is Orotidine 5'-phosphate decarboxylase (Lactococcus lactis subsp. cremoris (strain SK11)).